We begin with the raw amino-acid sequence, 152 residues long: ARL14 effector protein-like (152 aa).

Polar residues predominate over residues 1–16 (MTEPSQKNNSTQQELT). Residues 1–27 (MTEPSQKNNSTQQELTNHLFPEKSSQI) form a disordered region.

This is ARL14 effector protein-like (Arl14epl) from Mus musculus (Mouse).